Reading from the N-terminus, the 195-residue chain is Thymidylate kinase (195 aa).

7 to 14 (GIDGVGKS) contacts ATP.

Belongs to the thymidylate kinase family.

The enzyme catalyses dTMP + ATP = dTDP + ADP. Its function is as follows. Phosphorylation of dTMP to form dTDP in both de novo and salvage pathways of dTTP synthesis. The chain is Thymidylate kinase from Campylobacter hominis (strain ATCC BAA-381 / DSM 21671 / CCUG 45161 / LMG 19568 / NCTC 13146 / CH001A).